The primary structure comprises 587 residues: Arginine--tRNA ligase (587 aa).

A 'HIGH' region motif is present at residues Pro127 to His137.

It belongs to the class-I aminoacyl-tRNA synthetase family. In terms of assembly, monomer.

Its subcellular location is the cytoplasm. The enzyme catalyses tRNA(Arg) + L-arginine + ATP = L-arginyl-tRNA(Arg) + AMP + diphosphate. The protein is Arginine--tRNA ligase of Pseudomonas paraeruginosa (strain DSM 24068 / PA7) (Pseudomonas aeruginosa (strain PA7)).